We begin with the raw amino-acid sequence, 356 residues long: Phosphate acyltransferase (356 aa).

The protein belongs to the PlsX family. In terms of assembly, homodimer. Probably interacts with PlsY.

It localises to the cytoplasm. The enzyme catalyses a fatty acyl-[ACP] + phosphate = an acyl phosphate + holo-[ACP]. It functions in the pathway lipid metabolism; phospholipid metabolism. In terms of biological role, catalyzes the reversible formation of acyl-phosphate (acyl-PO(4)) from acyl-[acyl-carrier-protein] (acyl-ACP). This enzyme utilizes acyl-ACP as fatty acyl donor, but not acyl-CoA. In Mesorhizobium japonicum (strain LMG 29417 / CECT 9101 / MAFF 303099) (Mesorhizobium loti (strain MAFF 303099)), this protein is Phosphate acyltransferase.